Reading from the N-terminus, the 464-residue chain is UDP-N-acetylmuramoylalanine--D-glutamate ligase (464 aa).

Residue 112–118 (GTDGKTT) participates in ATP binding.

It belongs to the MurCDEF family.

The protein resides in the cytoplasm. The catalysed reaction is UDP-N-acetyl-alpha-D-muramoyl-L-alanine + D-glutamate + ATP = UDP-N-acetyl-alpha-D-muramoyl-L-alanyl-D-glutamate + ADP + phosphate + H(+). It functions in the pathway cell wall biogenesis; peptidoglycan biosynthesis. Its function is as follows. Cell wall formation. Catalyzes the addition of glutamate to the nucleotide precursor UDP-N-acetylmuramoyl-L-alanine (UMA). This is UDP-N-acetylmuramoylalanine--D-glutamate ligase from Chlorobium phaeobacteroides (strain DSM 266 / SMG 266 / 2430).